The following is a 148-amino-acid chain: Small ribosomal subunit protein eS6 (148 aa).

Belongs to the eukaryotic ribosomal protein eS6 family.

In Pyrobaculum arsenaticum (strain DSM 13514 / JCM 11321 / PZ6), this protein is Small ribosomal subunit protein eS6.